The chain runs to 74 residues: Spore germination protein GerE (74 aa).

The HTH luxR-type domain maps to 5 to 70 (EFQSKPLLTK…QAVVELLRMG (66 aa)). The H-T-H motif DNA-binding region spans 29–48 (TKEIASELFISEKTVRNHIS).

Functionally, involved in the regulation of spore formation. Directs the transcription of several genes that encode structural components of the protein coat that encases the mature spore (CotB, CotC, CotG, CotS, CotV, CotW, CotX, CotY and CotZ). Also controls the cgeAB and cgeCDE operons. The polypeptide is Spore germination protein GerE (gerE) (Bacillus subtilis (strain 168)).